We begin with the raw amino-acid sequence, 65 residues long: Large ribosomal subunit protein bL31 (65 aa).

Residues C16, C18, C36, and C39 each coordinate Zn(2+).

Belongs to the bacterial ribosomal protein bL31 family. Type A subfamily. In terms of assembly, part of the 50S ribosomal subunit. The cofactor is Zn(2+).

In terms of biological role, binds the 23S rRNA. This is Large ribosomal subunit protein bL31 from Geotalea daltonii (strain DSM 22248 / JCM 15807 / FRC-32) (Geobacter daltonii).